Consider the following 273-residue polypeptide: Undecaprenyl-diphosphatase (273 aa).

Helical transmembrane passes span Ile43–Tyr63, Lys82–Ile102, Leu109–Ala129, Thr185–Leu205, Ala214–Val234, and Phe249–Ile269.

The protein belongs to the UppP family.

It localises to the cell inner membrane. It carries out the reaction di-trans,octa-cis-undecaprenyl diphosphate + H2O = di-trans,octa-cis-undecaprenyl phosphate + phosphate + H(+). Functionally, catalyzes the dephosphorylation of undecaprenyl diphosphate (UPP). Confers resistance to bacitracin. The polypeptide is Undecaprenyl-diphosphatase (Laribacter hongkongensis (strain HLHK9)).